A 131-amino-acid chain; its full sequence is Holo-[acyl-carrier-protein] synthase (131 aa).

2 residues coordinate Mg(2+): aspartate 8 and glutamate 59.

This sequence belongs to the P-Pant transferase superfamily. AcpS family. The cofactor is Mg(2+).

It localises to the cytoplasm. The catalysed reaction is apo-[ACP] + CoA = holo-[ACP] + adenosine 3',5'-bisphosphate + H(+). In terms of biological role, transfers the 4'-phosphopantetheine moiety from coenzyme A to a Ser of acyl-carrier-protein. The protein is Holo-[acyl-carrier-protein] synthase of Rickettsia massiliae (strain Mtu5).